Reading from the N-terminus, the 153-residue chain is Cytochrome c-type biogenesis protein CcmE (153 aa).

Residues 1–6 lie on the Cytoplasmic side of the membrane; the sequence is MNARRR. The chain crosses the membrane as a helical; Signal-anchor for type II membrane protein span at residues 7-27; the sequence is LWSLLMLILAVGTAATLTIMA. Residues 28–153 lie on the Periplasmic side of the membrane; sequence LRRNLTYLYM…LDTPIAQTTP (126 aa). 2 residues coordinate heme: His-121 and Tyr-125. Over residues 130 to 141 the composition is skewed to polar residues; that stretch reads LTNKMQPTPTQH. Residues 130–153 form a disordered region; that stretch reads LTNKMQPTPTQHTHLDTPIAQTTP.

The protein belongs to the CcmE/CycJ family.

It is found in the cell inner membrane. In terms of biological role, heme chaperone required for the biogenesis of c-type cytochromes. Transiently binds heme delivered by CcmC and transfers the heme to apo-cytochromes in a process facilitated by CcmF and CcmH. This chain is Cytochrome c-type biogenesis protein CcmE, found in Xylella fastidiosa (strain 9a5c).